Here is a 306-residue protein sequence, read N- to C-terminus: Large ribosomal subunit protein uL2m (306 aa).

The N-terminal 60 residues, 1–60 (MALRVVTRALGSLSLTPRIAAVPGPSLLPAAQVTNNVLLQLPSASMLLPSRPLLTSVALS), are a transit peptide targeting the mitochondrion.

The protein belongs to the universal ribosomal protein uL2 family. Component of the mitochondrial ribosome large subunit (39S) which comprises a 16S rRNA and about 50 distinct proteins.

It is found in the mitochondrion. This chain is Large ribosomal subunit protein uL2m (MRPL2), found in Bos taurus (Bovine).